The sequence spans 434 residues: Sensor histidine kinase Hik2 (434 aa).

Residues 16 to 152 (ISLCQSQVRL…EAIAKSLAVA (137 aa)) form the GAF domain. Cys-19 contributes to the [3Fe-4S] cluster binding site. In terms of domain architecture, Histidine kinase spans 182–432 (DLLHQLRNPL…TFTLWLRSGE (251 aa)). His-185 carries the post-translational modification Phosphohistidine; by autocatalysis. A G1 box motif is present at residues 357–361 (DTGYG). Positions 386-390 (GTGLG) match the G2 box motif.

This sequence belongs to the chloroplast sensor kinase protein family. In terms of assembly, exists as monomers, tetramers, hexamers and other higher-order oligomers; all are able to autophosphorylate. Upon treatment with 0.5 M NaCl only tetramers are seen, which are probably inactive. Interacts with both RppA and Rre1. [3Fe-4S] cluster is required as a cofactor. Autophosphorylates, probably on His-185.

The protein resides in the cytoplasm. The catalysed reaction is ATP + protein L-histidine = ADP + protein N-phospho-L-histidine.. Its activity is regulated as follows. Autophosphorylation is inhibited by Na(+) but not by Cl(-). Reducing agents dithionite, duroquinol and decyl-plastoquinone, but not NADPH or ferredoxin inhibit autophosphorylation. Oxidation of the Fe-S cluster (with potassium ferricyanide) induces a conformational change that is conducive to its autophosphorylation activity. Member of possibly 2 two-component regulatory system(s) Hik2/Rre1 and Hik2/RppA. Transduces PQ (plastoquinone) redox signals to photosystem gene expression machinery during the adjustment of photosystem stoichiometry. Reduced PQ suppresses its autophosphorylation activity (i.e. kinase activity is higher under oxidizing conditions). Member of two-component regulatory system Hik2/Rre1, controls expression of sigB (sll0306), sll0528, slr1119, slr0852 and ssr3188 in response to hyperosmotic stress. Activity responds to high salt (with a linear response as concentrations rise to 0.5 M NaCl); detects Cl(-) levels. Autophosphorylates and transfers phosphate to Rre1. May transfer phosphate to RppA in a possible Hik2/RppA two-component system. In Synechocystis sp. (strain ATCC 27184 / PCC 6803 / Kazusa), this protein is Sensor histidine kinase Hik2.